A 210-amino-acid polypeptide reads, in one-letter code: Thymidylate kinase (210 aa).

10–17 (GPEGAGKS) provides a ligand contact to ATP.

This sequence belongs to the thymidylate kinase family.

It catalyses the reaction dTMP + ATP = dTDP + ADP. Phosphorylation of dTMP to form dTDP in both de novo and salvage pathways of dTTP synthesis. The protein is Thymidylate kinase of Pseudomonas fluorescens (strain SBW25).